We begin with the raw amino-acid sequence, 376 residues long: Chaperone protein DnaJ (376 aa).

Residues 5–70 form the J domain; that stretch reads DYYETLGVQK…EKRAAYDQYG (66 aa). Residues 133–211 form a CR-type zinc finger; sequence GTTKDIKINT…CHGDGRVHKK (79 aa). Zn(2+) is bound by residues Cys-146, Cys-149, Cys-163, Cys-166, Cys-185, Cys-188, Cys-199, and Cys-202. CXXCXGXG motif repeat units lie at residues 146-153, 163-170, 185-192, and 199-206; these read CDHCDGSG, CPTCHGHG, CPTCQGSG, and CKHCHGDG.

Belongs to the DnaJ family. As to quaternary structure, homodimer. Requires Zn(2+) as cofactor.

The protein localises to the cytoplasm. Functionally, participates actively in the response to hyperosmotic and heat shock by preventing the aggregation of stress-denatured proteins and by disaggregating proteins, also in an autonomous, DnaK-independent fashion. Unfolded proteins bind initially to DnaJ; upon interaction with the DnaJ-bound protein, DnaK hydrolyzes its bound ATP, resulting in the formation of a stable complex. GrpE releases ADP from DnaK; ATP binding to DnaK triggers the release of the substrate protein, thus completing the reaction cycle. Several rounds of ATP-dependent interactions between DnaJ, DnaK and GrpE are required for fully efficient folding. Also involved, together with DnaK and GrpE, in the DNA replication of plasmids through activation of initiation proteins. The polypeptide is Chaperone protein DnaJ (Mannheimia succiniciproducens (strain KCTC 0769BP / MBEL55E)).